Consider the following 452-residue polypeptide: Phosphoglucosamine mutase (452 aa).

The active-site Phosphoserine intermediate is the Ser101. 4 residues coordinate Mg(2+): Ser101, Asp241, Asp243, and Asp245. Ser101 carries the post-translational modification Phosphoserine.

This sequence belongs to the phosphohexose mutase family. It depends on Mg(2+) as a cofactor. In terms of processing, activated by phosphorylation.

It carries out the reaction alpha-D-glucosamine 1-phosphate = D-glucosamine 6-phosphate. Its function is as follows. Catalyzes the conversion of glucosamine-6-phosphate to glucosamine-1-phosphate. The polypeptide is Phosphoglucosamine mutase (Lactococcus lactis subsp. lactis (strain IL1403) (Streptococcus lactis)).